We begin with the raw amino-acid sequence, 1732 residues long: Transient receptor potential cation channel subfamily M member 3 (1732 aa).

The Cytoplasmic portion of the chain corresponds to 1–894; that stretch reads MPGPWGTVYF…RKIYEFYNAP (894 aa). Calmodulin-binding regions lie at residues 41–64, 192–215, 300–323, 601–624, and 793–816; these read WTIRKLCHAAFLPSVRLLKAQKSW, NFELQPKLKQVFGKGLIKAAMTTG, TGKYGAEVKLRRQLEKHISLQKIN, RKRFRTLYHNLFGPKRPKALKLLG, and RKNSGLKVILGILLPPSILSLEFK. The interval 617–625 is required for the inhibitory action of G-beta/gamma-subunits of heterotrimeric G-proteins; that stretch reads PKALKLLGM. Residue Ser796 coordinates 1,2-dioctanoyl-sn-glycero-3-phospho-(1D-myo-inositol-4,5-bisphosphate). The tract at residues 829 to 851 is disordered; sequence EIHLQEKEPEEPEKPTKEKDEED. Residues 831–847 show a composition bias toward basic and acidic residues; it reads HLQEKEPEEPEKPTKEK. A helical transmembrane segment spans residues 895-918; the sequence is IVKFWFYTLAYIGYLMLFNYIVLV. The Extracellular portion of the chain corresponds to 919 to 925; sequence KMERWPS. Residues 926–948 form a helical membrane-spanning segment; that stretch reads TQEWIVISYIFTLGIEKMREILM. Residues 949 to 964 are Cytoplasmic-facing; sequence SEPGKLLQKVKVWLQE. The helical transmembrane segment at 965–985 threads the bilayer; that stretch reads YWNVTDLIAILLFSVGMILRL. The Extracellular portion of the chain corresponds to 986-989; the sequence is QDQP. A helical membrane pass occupies residues 990–1013; sequence FRSDGRVIYCVNIIYWYIRLLDIF. Over 1014–1028 the chain is Cytoplasmic; it reads GVNKYLGPYVMMIGK. The 1,2-dioctanoyl-sn-glycero-3-phospho-(1D-myo-inositol-4,5-bisphosphate) site is built by Lys1017 and Tyr1018. Residues 1029 to 1056 traverse the membrane as a helical segment; sequence MMIDMMYFVIIMLVVLMSFGVARQAILF. Residues 1057-1073 lie on the Extracellular side of the membrane; it reads PNEEPSWKLAKNIFYMP. The segment at residues 1074 to 1101 is an intramembrane region (pore-forming); that stretch reads YWMIYGEVFADQIDPPCGQNETREDGKT. At 1102 to 1111 the chain is on the extracellular side; that stretch reads IQLPPCKTGA. The chain crosses the membrane as a helical span at residues 1112 to 1137; sequence WIVPAIMACYLLVANILLVNLLIAVF. Over 1138 to 1732 the chain is Cytoplasmic; that stretch reads NNTFFEVKSI…AFHSFESKHN (595 aa). The interval 1610-1732 is disordered; that stretch reads EREAELSHPS…AFHSFESKHN (123 aa). Composition is skewed to polar residues over residues 1635–1653 and 1690–1701; these read PISSQEAENADRTLSNNIT and NTASLRNPFQRS.

The protein belongs to the transient receptor (TC 1.A.4) family. LTrpC subfamily. TRPM3 sub-subfamily. In terms of assembly, homotetramer. Interacts with TRPM1; the interaction results in the formation of a heteromultimeric cation channel complex that are functionally different from the homomeric channels.

The protein localises to the cell membrane. It catalyses the reaction Ca(2+)(in) = Ca(2+)(out). The catalysed reaction is Mn(2+)(in) = Mn(2+)(out). It carries out the reaction Zn(2+)(in) = Zn(2+)(out). The enzyme catalyses Mg(2+)(in) = Mg(2+)(out). It catalyses the reaction Na(+)(in) = Na(+)(out). Activated by the neurosteroid pregnelonone sulfate (PregS). PregS activates the channel by shifting its current-voltage activation curve toward more negative membrane potentials and also potentiates temperature-induced activation. Activated by heat. Intracellular Ca(2+) inhibits TRPM3 probably via interaction with Ca(2+)/calmodulin. Intracellular Mg(2+) inhibits TRPM3 activity. Both intracellular and extracellular protons block TRPM3 through propable binding sites in the pore region. Positively regulated by phosphoinositide phosphoinositol 4,5-biphosphate (PI(4,5)P2). Strongly inhibited by activation of G(i)-coupled receptors via direct binding with G-beta/gamma-subunits of heterotrimeric G-proteins. With respect to regulation, insensitive to pregnenolone sulfate (PregS) or heat. Its activity is regulated as follows. Not inhibited by G-beta/gamma-subunits of heterotrimeric G-proteins. Its function is as follows. Constitutively active, non-selective divalent cation-conducting channel that is permeable to Ca(2+), Mn(2+), and Mg(2+), with a high permeability for Ca(2+). However, can be enhanced by increasing temperature and by ligands, including the endogenous neurosteroid pregnenolone sulfate and sphingosine-1 and suppressed by intracellular Mg(2+). Implicated in a variety of cellular processes, including insulin/peptide secretion, vascular constriction and dilation, noxious heat sensing, inflammatory and spontaneous pain sensitivity. In neurons of the dorsal root ganglia, functions as thermosensitive channel for the detection of noxious heat and spontaneous pain. Suggested to function as an ionotropic steroid receptor in beta-cell, indeed pregnenolone sulfate leads to Ca(2+) influx and enhanced insulin secretion. Mediates Zn(2+) uptake into the lumen of pancreatic beta cell secretory granules, thereby regulating insulin secretion. Forms heteromultimeric ion channels with TRPM1 which are permeable for Ca(2+) and Zn(2+) ions. Exists as multiple splice variants which differ significantly in their biophysical properties. Displays strongly reduced permeability for divalent cations and high selectivity toward monovalent cations. In terms of biological role, no channel activity. In Mus musculus (Mouse), this protein is Transient receptor potential cation channel subfamily M member 3.